The primary structure comprises 340 residues: Mitochondrial carrier protein CoAc1 (340 aa).

The next 6 membrane-spanning stretches (helical) occupy residues 22–42 (ALDL…AGAF), 85–105 (FYKG…LHYM), 130–147 (LLAG…TYPL), 199–219 (GVGP…YIYE), 237–257 (LSCG…LDVV), and 297–317 (FAGL…GFTT). Solcar repeat units lie at residues 27–113 (PVYA…YRCW), 124–224 (TGPV…LKSQ), and 231–324 (DSVI…MKAL).

Belongs to the mitochondrial carrier (TC 2.A.29) family. Expressed throughout the plant.

The protein resides in the mitochondrion inner membrane. Required for the accumulation of coenzyme A in the mitochondrial matrix. This is Mitochondrial carrier protein CoAc1 from Zea mays (Maize).